The primary structure comprises 380 residues: MASVAELKEKHAAATASVNSLRERLRQRRETLLDTDVARYSKSQGRVPVSFNPTDLVCCRTLQGHSGKVYSLDWTPEKNWIVSASQDGRLIVWNALTSQKTHAIKLHCPWVMACAFAPNGQSVACGGLDSACSIFNLNSQADRDGNMPVSRILTGHKGYVSSCQYVPDQETRLITSSGDQTCVLWDVTTGQRISIFGGEFPSGHTADVQSVSINSSNTNMFVSGSCDTTVRLWDIRIASRAVRTYHGHEDDVNSVKFFPDGHRFGTGSDDGTCRLFDMRTGHQLQVYSREPDRNSNELPTVTSIAFSISGRLLFAGYSNGDCYVWDTLLAEVVLNLGNLQNSHDGRISCLGMSSDGSALCTGSWDKNLKIWAFSGHRKIV.

WD repeat units follow at residues 64–94 (GHSGKVYSLDWTPEKNWIVSASQDGRLIVWN), 106–136 (LHCPWVMACAFAPNGQSVACGGLDSACSIFN), 155–186 (GHKGYVSSCQYVPDQETRLITSSGDQTCVLWD), 203–234 (GHTADVQSVSINSSNTNMFVSGSCDTTVRLWD), 247–277 (GHEDDVNSVKFFPDGHRFGTGSDDGTCRLFD), 296–326 (NELPTVTSIAFSISGRLLFAGYSNGDCYVWD), and 342–372 (SHDGRISCLGMSSDGSALCTGSWDKNLKIWA).

It belongs to the WD repeat G protein beta family. In terms of assembly, g proteins are composed of 3 units, alpha, beta and gamma. In terms of tissue distribution, present in the root, leaf and tassel.

Its function is as follows. Guanine nucleotide-binding proteins (G proteins) are involved as a modulator or transducer in various transmembrane signaling systems. The beta and gamma chains are required for the GTPase activity, for replacement of GDP by GTP, and for G protein-effector interaction. The protein is Guanine nucleotide-binding protein subunit beta (GB1) of Zea mays (Maize).